The chain runs to 235 residues: NAD(P)H-hydrate epimerase (235 aa).

The YjeF N-terminal domain maps to 12-218 (AIVMDQLLMG…EFLKETNLTI (207 aa)). Residue 62 to 66 (NNGGD) participates in (6S)-NADPHX binding. Asn-63 and Asp-127 together coordinate K(+). (6S)-NADPHX-binding positions include 131–137 (GYSFKGD) and Asp-161. Ser-164 is a K(+) binding site.

It belongs to the NnrE/AIBP family. K(+) serves as cofactor.

It catalyses the reaction (6R)-NADHX = (6S)-NADHX. It carries out the reaction (6R)-NADPHX = (6S)-NADPHX. Its function is as follows. Catalyzes the epimerization of the S- and R-forms of NAD(P)HX, a damaged form of NAD(P)H that is a result of enzymatic or heat-dependent hydration. This is a prerequisite for the S-specific NAD(P)H-hydrate dehydratase to allow the repair of both epimers of NAD(P)HX. In Dictyostelium discoideum (Social amoeba), this protein is NAD(P)H-hydrate epimerase.